The primary structure comprises 199 residues: Transgelin-2 (199 aa).

A2 is modified (N-acetylalanine). Residue S11 is modified to Phosphoserine. Residues K17 and K20 each carry the N6-acetyllysine modification. The 113-residue stretch at 24 to 136 (ADLEQILIQW…RTLMNLGGLA (113 aa)) folds into the Calponin-homology (CH) domain. S163 is modified (phosphoserine). K171 participates in a covalent cross-link: Glycyl lysine isopeptide (Lys-Gly) (interchain with G-Cter in SUMO2). The Calponin-like repeat unit spans residues 174–199 (IGLQMGTNRGASQAGMTGYGMPRQIL). A Phosphothreonine modification is found at T180. Omega-N-methylarginine is present on residues R182 and R196.

The protein belongs to the calponin family. In terms of tissue distribution, expressed in epididymis (at protein level).

The protein is Transgelin-2 (TAGLN2) of Homo sapiens (Human).